A 296-amino-acid chain; its full sequence is Bifunctional protein FolD (296 aa).

Residues 166 to 168, serine 195, and isoleucine 236 each bind NADP(+); that span reads GRS.

The protein belongs to the tetrahydrofolate dehydrogenase/cyclohydrolase family. In terms of assembly, homodimer.

It catalyses the reaction (6R)-5,10-methylene-5,6,7,8-tetrahydrofolate + NADP(+) = (6R)-5,10-methenyltetrahydrofolate + NADPH. The enzyme catalyses (6R)-5,10-methenyltetrahydrofolate + H2O = (6R)-10-formyltetrahydrofolate + H(+). It functions in the pathway one-carbon metabolism; tetrahydrofolate interconversion. Catalyzes the oxidation of 5,10-methylenetetrahydrofolate to 5,10-methenyltetrahydrofolate and then the hydrolysis of 5,10-methenyltetrahydrofolate to 10-formyltetrahydrofolate. This chain is Bifunctional protein FolD, found in Chlorobium limicola (strain DSM 245 / NBRC 103803 / 6330).